Consider the following 74-residue polypeptide: Consomatin Gh1 (74 aa).

The N-terminal stretch at 1–22 (MQTACWVMVMMMVWITAPLSEG) is a signal peptide. A propeptide spanning residues 23 to 57 (GKLNDVIRGLVPDDVTPQLILRSLFFHRPSDSVVR) is cleaved from the precursor. A disulfide bridge connects residues Cys-65 and Cys-70. At Trp-67 the chain carries D-tryptophan. 4-hydroxyproline occurs at positions 71, 72, and 74.

The protein belongs to the conotoxin C superfamily. Consomatin family. As to expression, expressed by the venom duct.

It localises to the secreted. Its function is as follows. Moderately activates human somatostatin receptors (SSTR) with a preferential activation of SSTR1 and SSTR4. In vivo, does not cause behavioral changes in mice within a few minutes of intracranial injection, but causes a progressive loss of movement thereafter. Four to five hours after injection, mice recover, even with the highest dose tested. Shows antinociception and antihyperalgesia activities in two mouse models of acute pain, most probably by acting outside the central nervous system. In Conus grahami (Cone snail), this protein is Consomatin Gh1.